The chain runs to 134 residues: Protein Turandot E (134 aa).

A signal peptide spans 1–38 (MSYTRTVHSSTSILKMNSALQISCLLVVLGCLLGSGHC).

This sequence belongs to the Turandot family.

The protein resides in the secreted. A humoral factor that may play a role in stress tolerance. This Drosophila simulans (Fruit fly) protein is Protein Turandot E.